Here is a 44-residue protein sequence, read N- to C-terminus: Photosystem I reaction center subunit IX (44 aa).

The chain crosses the membrane as a helical span at residues 7 to 27 (YLSVAPVLSTLSLGFLTGFLI).

Belongs to the PsaJ family.

The protein localises to the plastid membrane. May help in the organization of the PsaE and PsaF subunits. This chain is Photosystem I reaction center subunit IX, found in Cuscuta gronovii (Common dodder).